The primary structure comprises 157 residues: 3-hydroxyacyl-[acyl-carrier-protein] dehydratase FabZ (157 aa).

Residue histidine 58 is part of the active site.

The protein belongs to the thioester dehydratase family. FabZ subfamily.

The protein resides in the cytoplasm. The catalysed reaction is a (3R)-hydroxyacyl-[ACP] = a (2E)-enoyl-[ACP] + H2O. Functionally, involved in unsaturated fatty acids biosynthesis. Catalyzes the dehydration of short chain beta-hydroxyacyl-ACPs and long chain saturated and unsaturated beta-hydroxyacyl-ACPs. The protein is 3-hydroxyacyl-[acyl-carrier-protein] dehydratase FabZ of Brucella melitensis biotype 2 (strain ATCC 23457).